A 144-amino-acid chain; its full sequence is Histone H3.1 (144 aa).

Residues 1-45 (MARTKQSARKTTGGKAPRKQLSAKSARKGVSPASSAGAKKSRYRP) are disordered. An N6,N6,N6-trimethyllysine; alternate modification is found at Lys5. Residue Lys5 is modified to N6,N6-dimethyllysine; alternate. N6-methyllysine; alternate is present on residues Lys5 and Lys10. An N6-acetyllysine; alternate mark is found at Lys10, Lys15, Lys19, Lys24, Lys28, and Lys39. Lys15 is subject to N6,N6-dimethyllysine; alternate. N6-methyllysine; alternate is present on residues Lys19, Lys24, Lys28, and Lys39. N6,N6,N6-trimethyllysine; alternate occurs at positions 28 and 39. Residues Lys28 and Lys39 each carry the N6,N6-dimethyllysine; alternate modification. Residue Lys58 is modified to N6-acetyllysine.

Belongs to the histone H3 family. In terms of assembly, the nucleosome is a histone octamer containing two molecules each of H2A, H2B, H3 and H4 assembled in one H3-H4 heterotetramer and two H2A-H2B heterodimers. The octamer wraps approximately 147 bp of DNA. Mono-, di- and trimethylated to form H3K4me1/2/3. H3K4me activates gene expression by regulating transcription elongation and plays a role in telomere length maintenance. H3K4me enrichment correlates with transcription levels, and occurs in a 5' to 3' gradient with H3K4me3 enrichment at the 5'-end of genes, shifting to H3K4me2 and then H3K4me1. H3K36me represses gene expression. In terms of processing, acetylation of histone H3 leads to transcriptional activation.

It localises to the nucleus. The protein localises to the chromosome. Core component of nucleosome. Nucleosomes wrap and compact DNA into chromatin, limiting DNA accessibility to the cellular machineries which require DNA as a template. Histones thereby play a central role in transcription regulation, DNA repair, DNA replication and chromosomal stability. DNA accessibility is regulated via a complex set of post-translational modifications of histones, also called histone code, and nucleosome remodeling. This chain is Histone H3.1 (HHT1), found in Encephalitozoon cuniculi (strain GB-M1) (Microsporidian parasite).